Reading from the N-terminus, the 103-residue chain is MAAVSLSVSTVKPLGDRVFVKISESEEKTAGGILLPDTAKEKPQVGEVVQVGPGKSNDDGSRQAPEVGIGDKVLYSKYAGTDIKLGSDEYVLLSEKDILAVVG.

This sequence belongs to the GroES chaperonin family. Heptamer of 7 subunits arranged in a ring. Interacts with the chaperonin GroEL.

The protein resides in the cytoplasm. Functionally, together with the chaperonin GroEL, plays an essential role in assisting protein folding. The GroEL-GroES system forms a nano-cage that allows encapsulation of the non-native substrate proteins and provides a physical environment optimized to promote and accelerate protein folding. GroES binds to the apical surface of the GroEL ring, thereby capping the opening of the GroEL channel. The polypeptide is Co-chaperonin GroES (Synechococcus sp. (strain CC9311)).